Reading from the N-terminus, the 295-residue chain is ATP synthase gamma chain (295 aa).

Belongs to the ATPase gamma chain family. F-type ATPases have 2 components, CF(1) - the catalytic core - and CF(0) - the membrane proton channel. CF(1) has five subunits: alpha(3), beta(3), gamma(1), delta(1), epsilon(1). CF(0) has three main subunits: a, b and c.

The protein localises to the cell inner membrane. In terms of biological role, produces ATP from ADP in the presence of a proton gradient across the membrane. The gamma chain is believed to be important in regulating ATPase activity and the flow of protons through the CF(0) complex. The polypeptide is ATP synthase gamma chain (Chlorobium phaeobacteroides (strain BS1)).